Reading from the N-terminus, the 3507-residue chain is MGRRSQWIWAMRCQMLVPVLSLHIGLARALGCGCIASKIECLIRCNAPFPLLDAVGSVASQELQSLTGTVGVTSGAAAYPRWNLARARAPPHLPGTQDPLRRVRDPTPIVASSPGRRRGSWSGGYGQEASEPGVVGLCCAVLPIHPSLALAGVGGPDLRRFQEGPQRPSDHGAAEKHMETFIPIDLTTENQEMDKEETKTKPRLLRYEEKKYEDVKPLETQPAEIAEKETLEYKTVRTFSESLKSEKTEEPKDDDVIRNIIRLREKLGWQTILPQHSLKYGSSKIAIQKITLKKPLEDDGEFVYCLPRKSPKSLYNPYDLQVVSAHTAKHCKEFWVITASFISKLDSSRTYSLDEFCEEQLQQATQALKQLEDIRNKAISEMKSTFLKVAEKNEIKEYFESKLSEDDTTHFKLPKYRRLLETFFKFVMLVDYIFQELIRQLMNTAVTLLLELFNGSAGMPFSVEKKNENLIRTFKDNSFPTGKTTNDCEELVDNSKLHAISVQKSEVKTDTDINEILNSVEVGKDLRKTYAPIFEVNLCLRIPAESDSSENSKENFHESDQCPEECVMFEDEMSENKDNCVKKHSSEELLPKAKKSKEISYNLEDIISATITPLCQDPQLSIFIDLVSIMDLPNKTGSIIHYKEQTRWPDCHILFETDPAYQNIIVNLLTIIGNSMGLVNAYSHKFIKYCTMTEKAKIMSMKISSMGELTSKEFEAILNRFRNYFRHIVNMAIEKRIGIFNVVVESSLQQLECDPTEIEEFLEHFIFLNAISSKISKLEKEFLTMSQLYSVAKHHQIHISEEQIAIFQVLLLKFSQLKSSMKLSKINKDTAITKFRDNLEACISGLHVDVGNLKAKIRTPLLLCAGTQVSTAMEMIQTLSGEAASLTNKAKAYSHYQDCFSDSQSHMHSVNVEEITQIVLSEISDIEGDLTLRKKLWEAQEEWKRASWEWRNSSLQSIDVESVQRNVSKLMHIISVLEKEIYSIFIIPSIDDISAQLEESQVILATIKGSPHIGPIKSQIMFYNDCVKSFVSSYSREKLEKVHAGLMCHLEEVADLVVLDTSNSRTKAILGALLILYVHCRDIVINLLLKNIFNAEDFEWTRHLQYKWNEKQKLCYVSQGNASFTYGYEYLGCTSRLVITPLTDRCWLTLMEALHLNLGGCPAGPAGTGKTETVKDLAKCALFAFKCNTALIKLPNSLIVLTCFGLEKTVLVMNTVMSFRFVLEGKEIRINMSCAVFITMNPRYGGGVELPDNLKSLFRPVAMMVPHYQMIAEIILFSFGFKSANSLSGKLTNLYELARKQLSQQDHYNFGLRSLKIVLIMAGTKKREFKCDTSDSLSEADETLIVIEAIREASLPKCPPEDVPLFENIIGDIFPEVTVLKVNQLALEKVIYTATQQLGLQNWSSQKEKIIQFYNQLQVCVGVMLVGPTGGGKTTVRRILEKALTLLPIADFLSVAERKSASKISERKGKVDICVLNPKCVTLSELYGQLDPNTMEWTDGLLSATIRSYVYFNTPKNTKKDIDLRLKSRISDLSNVFKLDSSDTTETDDNIFEEIEKVVKIPENHNFDWQWIILDGPVDTFWVENLNSVLDDTRTLCLANSERIALTNKIRVIFEVDNLSQASPATVSRCAMVYMDPVDLGWEPYVKSWLLKTSKIISQSGVDCLEFMIKNSVTDGLQFIRNRQKFQPYPMEDITVVITLCRILDAFFDFMGKNGGFEQSDDLNDTSSKEANSQRESVTFKDIEKRDENTWYPEKNPDKLTKIIQKLFVFAFTWAFGGALNREDEHRENIPFCPSLEPDSLAKVTYDFDKLVHELFGNSSQVGINLPTGECSIFGYFVDIEQCEFIPWSDLVPNDQTLIQRDNPTKKPEVRTNKKLLKNNDHKGVVVSTINFSTNVTAAKTKEMILKKLIRRTKDTLGAPKNNRILIFIDDMNMPVSDMYGAQPPLELIRQLLDLGGVYDTEKNTWKNIQDLSIVAACVPVVNDISPRLLKHFSMLVLPHPSQDILCTIFQIGIDGCGKKTCATLACYLTDNKLYRVPISHKCAYIEFKEVFKKVFIHAGLKGKPTVLMVPNLNIEQDSFLEDLNYIISSGRIPDLFENVELDSIAMKIRYLTEQSGHMDNRQSLLSFFQKRIYKNLHIFVIMSPEGPSFRQNCRVYPSMISSCTIDWYERWPEEALLIVANSFLKEKVNFENRENLKEKLAPTCVQIHKSMKDLNRKYFEETGRFYYTTPNSYLQFMETFAHILRAREEEMQTKRDRFHMGLSTILEATTLVTEMQEELLILGPQVEQKTKETETLMEKLRKDSQVVEKVQMLVKQDEEIVAEEVRIVEDYAQKTANELKSVLPAFDKAIVALNALDKADVAELRVYTRPPFLVLTVMNAVCILLQKKPNWATAKLLLSETGFLKKLINLDKDSIPDKVFVKLKKIVTLPDFNPHKISLVSVACCSLCQWVIALNNYHEVQKVVGPKQIQVAEAQNVLKIARQRLAEKQRGLQLISRWHNQGLPHGQYSVENAILIKNGQQWPLLIDPHRQAHKWIRQMEGSRLQKLSIEDSNYTKKIENAMKTGGSVLLQSCQASTWRKKLYLSTEIDNPHFLPSVYNFVTMINFTVTFQGLQDQLLSTVVTHEVPHLEDQRSKLLESISLDAITLEELEEKTLNLLQKALGSILDDDKIVDTLRKSKMTSNEISKRIEATKKAESEIQAIRKNYLPIATRGALLYFLVADLTQINYMYQFSLDWFHQVFVSSVVSKSKEQEHSFKREKVSPKEVHEFISISKEPNLENEKNLLDKHIKSAIDMLTKSIFKVVSSALFNEDKLCFSFRLCTVIMQNNANGNLIQDDIGFLPEEEWNIFLYSGILINIKSALSQSRLTSTFEIGESQHLQWLSDSRWRQCQYVSTHLEPFSLLCKSLLSNVSQWDTFKNSKAVYSLISTPFSSENASLEENTKPPEEKHTFCLLLRAINHTGTDLGPVGRGQWLTSTACDRHTDVCSFSFALNDGVPDVEHVQDIFYGHCVDKYHVKVLRPESLNNSVRKFITEKMGNKYLQRTGVNLKDAYKGSNARTPLILIQTHGSASIKDYIHIIQSLPDDDLPEVLGIHPEAIRSCWETQGEKFIENLIAMQPKTTTANLMIRPEQSKDELVMEILSDLLKRLPLTVEKEEIAVGTPSTLKSMMSSSIWESLSKNLKDHDPLIHCVLLTFLKQEIKRFDKLLFVIHKSLKDLQLAIKGEIILTQELEEIFNSFLNMRVPTLWQKHAYRSCKPLSSWIDDLIQRLNFFNTWAKVAYTAIQRRYMRFVTVWKQSIPSTSQKCKHPEDSENNFFEGFPSRYWLPAFFFPQAFLAAVLQDYGRSRGIAVDALTFTHHVISNTTDKDEKFSVFMPKKLNIVRRAFKGSASSHTGVYIFGLFIEGARWNREQKILEDSLPLEMCCDFPDIYFLPTKISTKTPNASNQTDSELYAFECPVYQTPERSRILATTGLPTNFLTSVYLSTKKPPSHWITMRVALLCEKNEK.

Positions 91–126 (PHLPGTQDPLRRVRDPTPIVASSPGRRRGSWSGGYG) are disordered. A coiled-coil region spans residues 354–381 (DEFCEEQLQQATQALKQLEDIRNKAISE). Positions 1164–1171 (GPAGTGKT) match the GPAGTGKT motif motif. ATP-binding positions include 1164 to 1171 (GPAGTGKT) and 1427 to 1434 (GPTGGGKT). Asparagine 1818 is a glycosylation site (N-linked (GlcNAc...) asparagine).

Belongs to the dynein heavy chain family. As to quaternary structure, consists of at least two heavy chains and a number of intermediate and light chains.

The protein localises to the cytoplasm. It localises to the cytoskeleton. It is found in the cilium axoneme. Functionally, force generating protein of respiratory cilia. Produces force towards the minus ends of microtubules. Dynein has ATPase activity; the force-producing power stroke is thought to occur on release of ADP. Involved in sperm motility; implicated in sperm flagellar assembly. The chain is Dynein axonemal heavy chain 14 (DNAH14) from Homo sapiens (Human).